The chain runs to 123 residues: Large ribosomal subunit protein uL14 (123 aa).

This sequence belongs to the universal ribosomal protein uL14 family. Part of the 50S ribosomal subunit. Forms a cluster with proteins L3 and L19. In the 70S ribosome, L14 and L19 interact and together make contacts with the 16S rRNA in bridges B5 and B8.

Functionally, binds to 23S rRNA. Forms part of two intersubunit bridges in the 70S ribosome. The polypeptide is Large ribosomal subunit protein uL14 (Zymomonas mobilis subsp. mobilis (strain ATCC 31821 / ZM4 / CP4)).